We begin with the raw amino-acid sequence, 609 residues long: MEEEEGADDGEQGEEEVLVVNVGSTYPCKRSDGSQHDAEIVKVRYNKQAGREEYYAHYVGLNRRQNEWVDKSRLVLTKPPKEGETNGTDQEVTDTAEQPDSKTPQKRKIEEPEPEPKKAKVEEKDASKNASSLGAAGDFAEELTCPLCVELFKDPVMVACGHNFCRSCIDKAWEGQSSFACPECRESITDRKYTINRVLANLAKKAACTPVTPVEKKTRPLEKCSEHDERLKLYCKDDGTLSCVICRDSLKHASHNFLPILDAVGVYREELSAIVAPLEASLKVTEQLSSEQSDKIEQHNKNMSQYKEHITSEFEKLHKFLREREEKLLEQLKEQGENLLTEMENNLVKMQESQDAIKKTISLAKERMEDTDSISFLMDIKAFIDKCQEQQRAVISTGNTLLSKELCQGTFKGPIQYIMWKELKSVVIPSLTPMLLDPTSAHPNLHLSDGLTSVRYGENKLSLPDNPKRFSQCILVLGSQGFDSGRHYWEVEVGDKTAWDVGMASESSNRKGKIKLNPKNGYWAIWLRNGNAYKALESPSKSLSLSSHPRKIGVYVDYEGGQISFYNADDMTIIYTFNATFTEKLYPYLSPFLHDSGKNVDPLRFVHNK.

A Tudor-knot domain is found at 21–75 (NVGSTYPCKRSDGSQHDAEIVKVRYNKQAGREEYYAHYVGLNRRQNEWVDKSRLV). The span at 74 to 84 (LVLTKPPKEGE) shows a compositional bias: basic and acidic residues. The tract at residues 74-129 (LVLTKPPKEGETNGTDQEVTDTAEQPDSKTPQKRKIEEPEPEPKKAKVEEKDASKN) is disordered. Over residues 85 to 102 (TNGTDQEVTDTAEQPDSK) the composition is skewed to polar residues. Thr-103 bears the Phosphothreonine; by CDK1 mark. A compositionally biased stretch (basic and acidic residues) spans 107-127 (RKIEEPEPEPKKAKVEEKDAS). The RING-type zinc finger occupies 145–185 (CPLCVELFKDPVMVACGHNFCRSCIDKAWEGQSSFACPECR). The B box-type zinc-finger motif lies at 219 to 260 (RPLEKCSEHDERLKLYCKDDGTLSCVICRDSLKHASHNFLPI). The Zn(2+) site is built by Cys-224, His-227, Cys-246, and His-252. Residues 278 to 371 (LEASLKVTEQ…SLAKERMEDT (94 aa)) adopt a coiled-coil conformation. The B30.2/SPRY domain occupies 413 to 609 (GPIQYIMWKE…VDPLRFVHNK (197 aa)).

Monomer. In terms of processing, threonine (predominantly) and serine residues are phosphorylated during oocyte maturation, when CDK1 is active. As to expression, at the neurula stage, high expression in dorsal embryo region including neural folds and somites. Also high expression in adult brain (CNS) and low expression in oocytes.

It localises to the nucleus. In terms of biological role, transcription factor that determines dorsal-ventral body axis. The sequence is that of Nuclear factor 7, brain from Xenopus laevis (African clawed frog).